A 255-amino-acid polypeptide reads, in one-letter code: Protein YIPF7 (255 aa).

Over 1-124 (MSNLGQFDSD…ADGSIMNETD (124 aa)) the chain is Cytoplasmic. The helical transmembrane segment at 125 to 145 (LTGPILFCMALGATLLLAGKV) threads the bilayer. A topological domain (lumenal) is located at residue Gln146. A helical membrane pass occupies residues 147 to 167 (FGYVYGMSAIGCLGIHALLNL). Residues 168–180 (MSSSGVSYGCVAS) lie on the Cytoplasmic side of the membrane. The chain crosses the membrane as a helical span at residues 181–201 (VLGYCLLPMVILSSCAIFFSL). Topologically, residues 202–204 (QGT) are lumenal. Residues 205 to 225 (FGTVSALVIIGWCSLSASKIF) form a helical membrane-spanning segment. Over 226–234 (TSALAMEGQ) the chain is Cytoplasmic. The chain crosses the membrane as a helical span at residues 235-255 (QLLIAYPCALLYGLFALVTVF).

The protein belongs to the YIP1 family.

It is found in the endoplasmic reticulum membrane. The protein localises to the golgi apparatus. It localises to the cis-Golgi network membrane. The protein resides in the trans-Golgi network membrane. The polypeptide is Protein YIPF7 (YIPF7) (Bos taurus (Bovine)).